The following is a 198-amino-acid chain: Guanine nucleotide-binding protein subunit alpha-11 (198 aa).

The segment at 1–11 (LLGTGESGKST) is G1 motif. Positions 1 to 198 (LLGTGESGKS…LSEYDHVLVE (198 aa)) constitute a G-alpha domain. Residues 3 to 10 (GTGESGKS) and 137 to 140 (LRVR) each bind GTP. Serine 10 provides a ligand contact to Mg(2+). Residues 135–143 (DVLRVRVPT) are G2 motif. Position 143 (threonine 143) interacts with Mg(2+). A G3 motif region spans residues 158–167 (FRMVDVGGQR).

It belongs to the G-alpha family. G(q) subfamily. As to quaternary structure, g proteins are composed of 3 units; alpha, beta and gamma. The alpha chain contains the guanine nucleotide binding site. Interacts with RGS22. Interacts with NTSR1.

The protein localises to the cell membrane. It localises to the cytoplasm. The enzyme catalyses GTP + H2O = GDP + phosphate + H(+). Guanine nucleotide-binding proteins (G proteins) function as transducers downstream of G protein-coupled receptors (GPCRs) in numerous signaling cascades. The alpha chain contains the guanine nucleotide binding site and alternates between an active, GTP-bound state and an inactive, GDP-bound state. Signaling by an activated GPCR promotes GDP release and GTP binding. The alpha subunit has a low GTPase activity that converts bound GTP to GDP, thereby terminating the signal. Both GDP release and GTP hydrolysis are modulated by numerous regulatory proteins. Signaling is mediated via phospholipase C-beta-dependent inositol lipid hydrolysis for signal propagation: activates phospholipase C-beta: following GPCR activation, GNA11 activates PLC-beta (PLCB1, PLCB2, PLCB3 or PLCB4), leading to production of diacylglycerol (DAG) and inositol 1,4,5-trisphosphate (IP3). Transduces FFAR4 signaling in response to long-chain fatty acids (LCFAs). Together with GNAQ, required for heart development. In the respiratory epithelium, transmits OXGR1-dependent signals that lead to downstream intracellular Ca(2+) release and mucocilliary clearance of airborne pathogens. In Canis lupus familiaris (Dog), this protein is Guanine nucleotide-binding protein subunit alpha-11 (GNA11).